The sequence spans 151 residues: Deoxyuridine 5'-triphosphate nucleotidohydrolase (151 aa).

Residues 70–72 (RSG), N83, 87–89 (LID), and M97 each bind substrate.

It belongs to the dUTPase family. Mg(2+) is required as a cofactor.

It catalyses the reaction dUTP + H2O = dUMP + diphosphate + H(+). The protein operates within pyrimidine metabolism; dUMP biosynthesis; dUMP from dCTP (dUTP route): step 2/2. Its function is as follows. This enzyme is involved in nucleotide metabolism: it produces dUMP, the immediate precursor of thymidine nucleotides and it decreases the intracellular concentration of dUTP so that uracil cannot be incorporated into DNA. The polypeptide is Deoxyuridine 5'-triphosphate nucleotidohydrolase (Pseudomonas paraeruginosa (strain DSM 24068 / PA7) (Pseudomonas aeruginosa (strain PA7))).